A 336-amino-acid chain; its full sequence is MLYPLIKQALFQLDPERAHELTFQQLKRITGTPLEWLVRQSVPTKTVNCMGIAFKNPLGLAAGLDKDGDCIDALGAMGFGFIEVGTVTPRAQPGNEKPRLFRLVKAGGLINRMGFNNHGVDNLVENVRKSHFGGVLGINIGKNKDTPVEQGKDDYLTCMEKVYPYAGYIAVNISSPNTPGLRTLQFGEALDDLLLAIKNKQVALQAYHHKYVPVAVKIAPDMTEAELIQVADSLVRHNIDGVIATNTTTGRVLVQGMNHCGQTGGLSGRPLQLRSTEVIRQLSAELQGKLPIIGGGGIDSLIAAREKMAAGASLIQIYSGFIFHGPRLIKDIVSDI.

FMN is bound by residues 62–66 and Thr86; that span reads AGLDK. Lys66 provides a ligand contact to substrate. A substrate-binding site is contributed by 111–115; that stretch reads NRMGF. FMN-binding residues include Asn139 and Asn172. Asn172 is a substrate binding site. The Nucleophile role is filled by Ser175. Asn177 is a binding site for substrate. Residues Lys217 and Thr245 each contribute to the FMN site. Residue 246 to 247 coordinates substrate; that stretch reads NT. FMN-binding positions include Gly268, Gly297, and 318–319; that span reads YS.

It belongs to the dihydroorotate dehydrogenase family. Type 2 subfamily. Monomer. Requires FMN as cofactor.

It is found in the cell membrane. The catalysed reaction is (S)-dihydroorotate + a quinone = orotate + a quinol. It functions in the pathway pyrimidine metabolism; UMP biosynthesis via de novo pathway; orotate from (S)-dihydroorotate (quinone route): step 1/1. Its function is as follows. Catalyzes the conversion of dihydroorotate to orotate with quinone as electron acceptor. The sequence is that of Dihydroorotate dehydrogenase (quinone) from Sodalis glossinidius (strain morsitans).